Reading from the N-terminus, the 111-residue chain is Thiosulfate sulfurtransferase GlpE (111 aa).

The Rhodanese domain maps to 16 to 104 (QTENAVLLDV…WQRAGLPMET (89 aa)). The active-site Cysteine persulfide intermediate is cysteine 64.

Belongs to the GlpE family.

The protein resides in the cytoplasm. It catalyses the reaction thiosulfate + hydrogen cyanide = thiocyanate + sulfite + 2 H(+). It carries out the reaction thiosulfate + [thioredoxin]-dithiol = [thioredoxin]-disulfide + hydrogen sulfide + sulfite + 2 H(+). In terms of biological role, transferase that catalyzes the transfer of sulfur from thiosulfate to thiophilic acceptors such as cyanide or dithiols. May function in a CysM-independent thiosulfate assimilation pathway by catalyzing the conversion of thiosulfate to sulfite, which can then be used for L-cysteine biosynthesis. The sequence is that of Thiosulfate sulfurtransferase GlpE from Actinobacillus succinogenes (strain ATCC 55618 / DSM 22257 / CCUG 43843 / 130Z).